The following is a 183-amino-acid chain: Hypoxanthine-guanine phosphoribosyltransferase (183 aa).

Residues arginine 47 and glycine 48 each contribute to the diphosphate site. Residues glutamate 103 and aspartate 104 each contribute to the Mg(2+) site. The active-site Proton acceptor is aspartate 107. GMP contacts are provided by residues lysine 134, 155 to 156 (FV), and aspartate 162. Arginine 168 serves as a coordination point for diphosphate.

It belongs to the purine/pyrimidine phosphoribosyltransferase family. Requires Mg(2+) as cofactor.

It localises to the cytoplasm. It catalyses the reaction IMP + diphosphate = hypoxanthine + 5-phospho-alpha-D-ribose 1-diphosphate. The catalysed reaction is GMP + diphosphate = guanine + 5-phospho-alpha-D-ribose 1-diphosphate. Its pathway is purine metabolism; IMP biosynthesis via salvage pathway; IMP from hypoxanthine: step 1/1. It functions in the pathway purine metabolism; GMP biosynthesis via salvage pathway; GMP from guanine: step 1/1. Purine salvage pathway enzyme that catalyzes the transfer of the ribosyl-5-phosphate group from 5-phospho-alpha-D-ribose 1-diphosphate (PRPP) to the N9 position of the 6-oxopurines hypoxanthine and guanine to form the corresponding ribonucleotides IMP (inosine 5'-monophosphate) and GMP (guanosine 5'-monophosphate), with the release of PPi. This chain is Hypoxanthine-guanine phosphoribosyltransferase (hpt), found in Lactococcus lactis subsp. lactis (strain IL1403) (Streptococcus lactis).